The primary structure comprises 518 residues: Circadian clock oscillator protein KaiC (518 aa).

One can recognise a KaiC 1 domain in the interval 1-247 (MTNLPEHQSS…FTINNGINIF (247 aa)). ATP is bound by residues serine 49, glycine 50, threonine 51, glycine 52, lysine 53, threonine 54, and leucine 55. Threonine 54 serves as a coordination point for Mg(2+). Glutamate 78 (proton acceptor in CI (KaiC 1)) is an active-site residue. Serine 90 provides a ligand contact to ATP. Positions 116–123 (QEVAGDFD) are B-loop, required to bind KaiB and SasA. 5 residues coordinate ATP: lysine 225, leucine 226, arginine 227, threonine 229, and histidine 231. Positions 248 to 260 (PLGAMRLTQRSSN) are linker. One can recognise a KaiC 2 domain in the interval 261 to 518 (VRVSSGVKTL…AKGMQDLESE (258 aa)). ATP-binding residues include threonine 290, glycine 291, threonine 292, glycine 293, lysine 294, threonine 295, and leucine 296. A Mg(2+)-binding site is contributed by threonine 295. Glutamate 318 contacts Mg(2+). Glutamate 318 acts as the Proton acceptor in CII (KaiC 2) in catalysis. Tryptophan 331 is a binding site for ATP. The residue at position 431 (serine 431) is a Phosphoserine; by autocatalysis. Phosphothreonine; by autocatalysis is present on threonine 432. 7 residues coordinate ATP: arginine 451, lysine 457, methionine 458, arginine 459, serine 461, histidine 463, and lysine 465. The interval 488–497 (GIISGTPTRI) is A-loop, interacts with KaiA.

It belongs to the KaiC family. In terms of assembly, homohexamer resembling 2 stacked donuts rings with a central pore nearly blocked on one side; hexamerization is dependent on ATP-binding. Binds 2 ATP per monomer, at the subunit interface on each ring. The KaiABC complex composition changes during the circadian cycle to control KaiC phosphorylation. Complexes KaiC(6), KaiA(2-4):KaiC(6), KaiB(6):KaiC(6) and KaiC(6):KaiB(6):KaiA(12) are among the most important forms, many form cooperatively. Interacts with SasA, probably as 1 SasA trimer:1 KaiC homohexamer, has highest affinity for unphosphorylated SasA. The CI domain binds to KaiB and SasA; as they have a similar fold they compete for the same site on CI. KaiB assumes a thioredoxin-like form called KaiB(fs) when bound to KaiC. Mg(2+) is required as a cofactor. Post-translationally, phosphorylated on serine/threonine residues by autocatalysis. Both phosphorylated and unphosphorylated forms exist. Both autophosphorylates and autodephosphorylates. Phosphorylated form correlates with clock speed. In terms of processing, phosphorylated on serine and threonine residues by autocatalysis. Has a 4 step phosphorylation cycle; the autokinase acts first on Thr-432, then Ser-431. When Ser-431 is modified KaiC switches to an autophosphatase mode, acting first on phospho-Thr-432 then phospho-Ser-431.

It carries out the reaction L-seryl-[protein] + ATP = O-phospho-L-seryl-[protein] + ADP + H(+). The enzyme catalyses L-threonyl-[protein] + ATP = O-phospho-L-threonyl-[protein] + ADP + H(+). The catalysed reaction is ATP + H2O = ADP + phosphate + H(+). The interaction with KaiA enhances its phosphorylation status, while the interaction with KaiB decreases it. Functionally, central component of the KaiABC oscillator complex, which constitutes the main circadian regulator in cyanobacteria. Complex composition changes during the circadian cycle to control KaiC phosphorylation. KaiA stimulates KaiC autophosphorylation, while KaiB sequesters KaiA, leading to KaiC autodephosphorylation. Clock output pathways impact the RpaA transcriptional regulator. KaiC enhances the autophosphorylation activity of SasA, which then transfers its phosphate group to RpaA to activate it. KaiB and KaiC together enhance the phospho-RpaA dephosphatase activity of CikA. In terms of biological role, stimulates SasA autophosphorylation. Fully phosphorylated KaiC (tested with phosphomimetic Asp-431-432-Asp) is the best stimulant, requires the ATPase activity of the CII domain. Unphosphorylated SasA associates with KaiC and its autophosphorylation activity is enhanced. Phospho-SasA is released and associates with RpaA, transferring its phosphate group. Formation of the KaiA:KaiB complex is promoted by KaiC, helping switch KaiC from its autophosphorylation to autodephosphatase function. Has a weak, temperature-independent ATPase activity (about 14 molecules of ATP per day) that defines the circadian period. ATPase activity is mostly contributed by the CI domain; the CII domain augments the activity. The addition of KaiA increases activity. ATPase is inhibited during the KaiC phosphorylating phase and activated during the KaiC dephosphorylating phase. The protein is Circadian clock oscillator protein KaiC of Thermosynechococcus vestitus (strain NIES-2133 / IAM M-273 / BP-1).